The chain runs to 500 residues: Oryzalexin D synthase (500 aa).

Residues 4–24 (SQMWLLWGALSVALFFYFSTL) traverse the membrane as a helical segment. Cys-442 contributes to the heme binding site.

Belongs to the cytochrome P450 family. Heme is required as a cofactor.

The protein localises to the membrane. The catalysed reaction is ent-cassa-12,15-diene + reduced [NADPH--hemoprotein reductase] + O2 = ent-11beta-hydroxycassa-12,15-diene + oxidized [NADPH--hemoprotein reductase] + H2O + H(+). The enzyme catalyses ent-sandaracopimaradien-3beta-ol + reduced [NADPH--hemoprotein reductase] + O2 = oryzalexin D + oxidized [NADPH--hemoprotein reductase] + H2O + H(+). Enzyme of the diterpenoid metabolism involved in the biosynthesis of both phytocassane and the oryzalexin class of phytoalexins. Can hydroxylate syn-pimaradiene, ent-pimaradiene, ent-sandaracopimaradiene, ent-isokaurene, ent-kaurene, and ent-cassadiene, but no activity with syn-stemodene, syn-stemarene, syn-labdatriene, C11-alpha-hydroxy-ent-cassadiene or syn-pimadien-19-oic acid as substrates. Hydroxylates 3-alpha-hydroxy-ent-sandaracopimaradiene at C-7-beta, resulting in a 3-alpha,7-beta-diol corresponding to oryzalexins D. The polypeptide is Oryzalexin D synthase (Oryza sativa subsp. japonica (Rice)).